A 347-amino-acid polypeptide reads, in one-letter code: N6-Methyl-AMP deaminase-L (347 aa).

Residues His-19 and His-21 each coordinate Zn(2+). N(6)-methyl-AMP-binding positions include His-21, Asn-23, His-69, 101–104 (STPR), Asp-142, and Gly-175. His-202 lines the Zn(2+) pocket. Residues Glu-205, Asp-283, and Asp-284 each coordinate N(6)-methyl-AMP. Residue Glu-205 is the Proton donor of the active site. Asp-283 contributes to the Zn(2+) binding site.

The protein belongs to the metallo-dependent hydrolases superfamily. Adenosine and AMP deaminases family. As to quaternary structure, monomer. Zn(2+) is required as a cofactor.

The catalysed reaction is N(6)-methyl-AMP + H2O + H(+) = IMP + methylamine. In terms of biological role, catalyzes the hydrolysis of the free cytosolic methylated adenosine nucleotide N(6)-methyl-AMP (N6-mAMP) to produce inositol monophosphate (IMP) and methylamine. Is required for the catabolism of cytosolic N6-mAMP, which is derived from the degradation of mRNA containing N6-methylated adenine (m6A). The chain is N6-Methyl-AMP deaminase-L (mapda.L) from Xenopus laevis (African clawed frog).